A 444-amino-acid chain; its full sequence is Tol-Pal system protein TolB (444 aa).

The first 19 residues, 1 to 19 (MRNIIYFILSLLFSVTSYA), serve as a signal peptide directing secretion.

The protein belongs to the TolB family. In terms of assembly, the Tol-Pal system is composed of five core proteins: the inner membrane proteins TolA, TolQ and TolR, the periplasmic protein TolB and the outer membrane protein Pal. They form a network linking the inner and outer membranes and the peptidoglycan layer.

The protein resides in the periplasm. Its function is as follows. Part of the Tol-Pal system, which plays a role in outer membrane invagination during cell division and is important for maintaining outer membrane integrity. The sequence is that of Tol-Pal system protein TolB from Rickettsia africae (strain ESF-5).